Reading from the N-terminus, the 218-residue chain is Large ribosomal subunit protein bL25 (218 aa).

Belongs to the bacterial ribosomal protein bL25 family. CTC subfamily. In terms of assembly, part of the 50S ribosomal subunit; part of the 5S rRNA/L5/L18/L25 subcomplex. Contacts the 5S rRNA. Binds to the 5S rRNA independently of L5 and L18.

Functionally, this is one of the proteins that binds to the 5S RNA in the ribosome where it forms part of the central protuberance. This Gluconobacter oxydans (strain 621H) (Gluconobacter suboxydans) protein is Large ribosomal subunit protein bL25.